Here is a 164-residue protein sequence, read N- to C-terminus: Rhomboid-related protein 1 (164 aa).

4 helical membrane passes run 10-30 (GFNALLQLMIGVPLEMVHGVL), 32-52 (ISLLYLAGVLAGSLTVSITDM), 56-76 (VVGGSGGVYALCSAHLANVVM), and 120-140 (PSFMAHLAGAVVGVSMGLTIL). The active-site Nucleophile is the Ser60. His125 is an active-site residue.

This sequence belongs to the peptidase S54 family.

It is found in the membrane. It catalyses the reaction Cleaves type-1 transmembrane domains using a catalytic dyad composed of serine and histidine that are contributed by different transmembrane domains.. Its function is as follows. May be involved in regulated intramembrane proteolysis and the subsequent release of functional polypeptides from their membrane anchors. This chain is Rhomboid-related protein 1 (Rhbdl1), found in Rattus norvegicus (Rat).